The following is a 152-amino-acid chain: UPF0735 ACT domain-containing protein CTC_00116 (152 aa).

Residues 76-151 (IISVTLNHRP…NVIKLDLIAM (76 aa)) form the ACT domain.

It belongs to the UPF0735 family.

This chain is UPF0735 ACT domain-containing protein CTC_00116, found in Clostridium tetani (strain Massachusetts / E88).